Reading from the N-terminus, the 66-residue chain is MAKGKDVRVTVILECTDCVRNSVNKVSTGISRYITQKNRHNTPNRLELKKFCPYCYKHTVHGEIKK.

This sequence belongs to the bacterial ribosomal protein bL33 family.

Its subcellular location is the plastid. The protein localises to the chloroplast. The polypeptide is Large ribosomal subunit protein bL33c (Coffea arabica (Arabian coffee)).